A 97-amino-acid chain; its full sequence is Co-chaperonin GroES (97 aa).

The protein belongs to the GroES chaperonin family. Heptamer of 7 subunits arranged in a ring. Interacts with the chaperonin GroEL.

Its subcellular location is the cytoplasm. Together with the chaperonin GroEL, plays an essential role in assisting protein folding. The GroEL-GroES system forms a nano-cage that allows encapsulation of the non-native substrate proteins and provides a physical environment optimized to promote and accelerate protein folding. GroES binds to the apical surface of the GroEL ring, thereby capping the opening of the GroEL channel. The sequence is that of Co-chaperonin GroES from Pseudarthrobacter chlorophenolicus (strain ATCC 700700 / DSM 12829 / CIP 107037 / JCM 12360 / KCTC 9906 / NCIMB 13794 / A6) (Arthrobacter chlorophenolicus).